A 256-amino-acid polypeptide reads, in one-letter code: Small ribosomal subunit protein uS2 (256 aa).

Residues 104–149 (NFKTISQRVHRLEELEALFASPEIEERPKKEQVRLKHELERLQKYL) adopt a coiled-coil conformation.

This sequence belongs to the universal ribosomal protein uS2 family. In terms of assembly, part of the 30S ribosomal subunit. Contacts protein S8.

In terms of biological role, spans the head-body hinge region of the 30S subunit. Is loosely associated with the 30S subunit. The chain is Small ribosomal subunit protein uS2 (rpsB) from Thermus thermophilus (strain ATCC BAA-163 / DSM 7039 / HB27).